The sequence spans 180 residues: Cytokinin-beta-glucosidase 3 (180 aa).

Its function is as follows. Hydrolyzes cytokinin glucosides thus liberating free cytokinins. In Panax ginseng (Korean ginseng), this protein is Cytokinin-beta-glucosidase 3 (ROLC3).